Consider the following 93-residue polypeptide: UPF0521 protein B (93 aa).

Positions 2 to 58 (SLKEVITSLKNDFHSINKEIDSMKENNEKQEEKIFQEIKKLKLEMELLRKDNLSFKT) form a coiled coil.

This sequence belongs to the UPF0521 family.

This Dictyostelium discoideum (Social amoeba) protein is UPF0521 protein B.